The primary structure comprises 192 residues: Imidazoleglycerol-phosphate dehydratase (192 aa).

Belongs to the imidazoleglycerol-phosphate dehydratase family.

It is found in the cytoplasm. The enzyme catalyses D-erythro-1-(imidazol-4-yl)glycerol 3-phosphate = 3-(imidazol-4-yl)-2-oxopropyl phosphate + H2O. Its pathway is amino-acid biosynthesis; L-histidine biosynthesis; L-histidine from 5-phospho-alpha-D-ribose 1-diphosphate: step 6/9. The sequence is that of Imidazoleglycerol-phosphate dehydratase from Staphylococcus epidermidis (strain ATCC 35984 / DSM 28319 / BCRC 17069 / CCUG 31568 / BM 3577 / RP62A).